The chain runs to 259 residues: Ribonuclease HII (259 aa).

In terms of domain architecture, RNase H type-2 spans 70-258; sequence TLIVGIDEVG…VKSLVLGKKE (189 aa). The a divalent metal cation site is built by Asp-76, Glu-77, and Asp-168.

Belongs to the RNase HII family. Requires Mn(2+) as cofactor. The cofactor is Mg(2+).

The protein resides in the cytoplasm. It carries out the reaction Endonucleolytic cleavage to 5'-phosphomonoester.. Functionally, endonuclease that specifically degrades the RNA of RNA-DNA hybrids. This Streptococcus pneumoniae (strain ATCC 700669 / Spain 23F-1) protein is Ribonuclease HII.